A 397-amino-acid chain; its full sequence is Bifunctional enzyme IspD/IspF (397 aa).

The segment at 1-236 is 2-C-methyl-D-erythritol 4-phosphate cytidylyltransferase; the sequence is MSIAAVILAA…QKKMQMFPDI (236 aa). The segment at 237–397 is 2-C-methyl-D-erythritol 2,4-cyclodiphosphate synthase; the sequence is RTGNGYDVHS…NVLYPGEIPK (161 aa). A divalent metal cation contacts are provided by D243 and H245. 4-CDP-2-C-methyl-D-erythritol 2-phosphate is bound by residues 243–245 and 269–270; these read DVH and HS. H277 provides a ligand contact to a divalent metal cation. Residues 291 to 293, 367 to 370, F374, and R377 each bind 4-CDP-2-C-methyl-D-erythritol 2-phosphate; these read DIG and TTNE.

This sequence in the N-terminal section; belongs to the IspD/TarI cytidylyltransferase family. IspD subfamily. The protein in the C-terminal section; belongs to the IspF family. Requires a divalent metal cation as cofactor.

It carries out the reaction 2-C-methyl-D-erythritol 4-phosphate + CTP + H(+) = 4-CDP-2-C-methyl-D-erythritol + diphosphate. The catalysed reaction is 4-CDP-2-C-methyl-D-erythritol 2-phosphate = 2-C-methyl-D-erythritol 2,4-cyclic diphosphate + CMP. It functions in the pathway isoprenoid biosynthesis; isopentenyl diphosphate biosynthesis via DXP pathway; isopentenyl diphosphate from 1-deoxy-D-xylulose 5-phosphate: step 2/6. The protein operates within isoprenoid biosynthesis; isopentenyl diphosphate biosynthesis via DXP pathway; isopentenyl diphosphate from 1-deoxy-D-xylulose 5-phosphate: step 4/6. Bifunctional enzyme that catalyzes the formation of 4-diphosphocytidyl-2-C-methyl-D-erythritol from CTP and 2-C-methyl-D-erythritol 4-phosphate (MEP) (IspD), and catalyzes the conversion of 4-diphosphocytidyl-2-C-methyl-D-erythritol 2-phosphate (CDP-ME2P) to 2-C-methyl-D-erythritol 2,4-cyclodiphosphate (ME-CPP) with a corresponding release of cytidine 5-monophosphate (CMP) (IspF). In Bartonella henselae (strain ATCC 49882 / DSM 28221 / CCUG 30454 / Houston 1) (Rochalimaea henselae), this protein is Bifunctional enzyme IspD/IspF.